The sequence spans 49 residues: Large ribosomal subunit protein bL33 (49 aa).

Belongs to the bacterial ribosomal protein bL33 family.

This chain is Large ribosomal subunit protein bL33, found in Leuconostoc citreum (strain KM20).